The sequence spans 293 residues: Acetylglutamate kinase (293 aa).

Residues 67–68, arginine 89, and asparagine 190 each bind substrate; that span reads GG.

This sequence belongs to the acetylglutamate kinase family. ArgB subfamily.

It is found in the cytoplasm. It carries out the reaction N-acetyl-L-glutamate + ATP = N-acetyl-L-glutamyl 5-phosphate + ADP. It participates in amino-acid biosynthesis; L-arginine biosynthesis; N(2)-acetyl-L-ornithine from L-glutamate: step 2/4. Its function is as follows. Catalyzes the ATP-dependent phosphorylation of N-acetyl-L-glutamate. In Nitrosospira multiformis (strain ATCC 25196 / NCIMB 11849 / C 71), this protein is Acetylglutamate kinase.